The following is a 464-amino-acid chain: Light-independent protochlorophyllide reductase subunit N (464 aa).

[4Fe-4S] cluster-binding residues include Cys29, Cys54, and Cys114.

The protein belongs to the BchN/ChlN family. As to quaternary structure, protochlorophyllide reductase is composed of three subunits; ChlL, ChlN and ChlB. Forms a heterotetramer of two ChlB and two ChlN subunits. Requires [4Fe-4S] cluster as cofactor.

Its subcellular location is the plastid. It is found in the chloroplast. The catalysed reaction is chlorophyllide a + oxidized 2[4Fe-4S]-[ferredoxin] + 2 ADP + 2 phosphate = protochlorophyllide a + reduced 2[4Fe-4S]-[ferredoxin] + 2 ATP + 2 H2O. Its pathway is porphyrin-containing compound metabolism; chlorophyll biosynthesis (light-independent). Functionally, component of the dark-operative protochlorophyllide reductase (DPOR) that uses Mg-ATP and reduced ferredoxin to reduce ring D of protochlorophyllide (Pchlide) to form chlorophyllide a (Chlide). This reaction is light-independent. The NB-protein (ChlN-ChlB) is the catalytic component of the complex. The polypeptide is Light-independent protochlorophyllide reductase subunit N (Stigeoclonium helveticum (Green alga)).